The following is a 232-amino-acid chain: Ribose-5-phosphate isomerase A (232 aa).

Substrate is bound by residues 29 to 32 (TGST), 84 to 87 (DGAD), and 97 to 100 (KGGG). Glu-106 serves as the catalytic Proton acceptor. Lys-124 serves as a coordination point for substrate.

Belongs to the ribose 5-phosphate isomerase family. In terms of assembly, homodimer.

The catalysed reaction is aldehydo-D-ribose 5-phosphate = D-ribulose 5-phosphate. It functions in the pathway carbohydrate degradation; pentose phosphate pathway; D-ribose 5-phosphate from D-ribulose 5-phosphate (non-oxidative stage): step 1/1. In terms of biological role, catalyzes the reversible conversion of ribose-5-phosphate to ribulose 5-phosphate. This Brucella suis biovar 1 (strain 1330) protein is Ribose-5-phosphate isomerase A.